A 307-amino-acid polypeptide reads, in one-letter code: Retron Ec86 putative ribosyltransferase/DNA-binding protein (307 aa).

Possible ribosyltransferase/DNA-binding component of antiviral defense system retron Ec86, composed of a non-coding RNA (ncRNA), a ribosyltransferase/DNA-binding protein and a reverse transcriptase (RT). Expression of the 3-gene retron confers protection against bacteriophages T5. At multiplicity of infection (MOI) of 0.02 cultures grow normally when infected with T5 without collapsing, at MOI 2 cultures enter growth stasis. This chain is Retron Ec86 putative ribosyltransferase/DNA-binding protein, found in Escherichia coli.